The following is a 465-amino-acid chain: 2-halobenzoate 1,2-dioxygenase large subunit (465 aa).

The Rieske domain maps to 56-154; that stretch reads WVFLAHESQV…GFNVDGSHDL (99 aa). [2Fe-2S] cluster contacts are provided by Cys-98, His-100, Cys-118, and His-121. Residues His-227 and His-232 each contribute to the Fe cation site.

Belongs to the bacterial ring-hydroxylating dioxygenase alpha subunit family. Heterohexamer of 3 large (CbdA) subunits and 3 small (CbdB) subunits. The heterohexamer is part of 2-halobenzoate dioxygenase two component enzyme system. The other component is a NADH:acceptor reductase (CdbC). [2Fe-2S] cluster is required as a cofactor. Requires Fe(2+) as cofactor.

It carries out the reaction a 2-halobenzoate + NADH + O2 + H(+) = a halide anion + catechol + CO2 + NAD(+). The protein operates within xenobiotic degradation; benzoate degradation via CoA ligation. Component of 2-halobenzoate dioxygenase multicomponent enzyme system which catalyzes the incorporation of both atoms of molecular oxygen into 2-halobenzoate to form catechol. In Burkholderia cepacia (Pseudomonas cepacia), this protein is 2-halobenzoate 1,2-dioxygenase large subunit (cbdA).